Consider the following 260-residue polypeptide: Dof zinc finger protein DOF1.2 (260 aa).

The Dof-type zinc-finger motif lies at P38 to R92. C40, C43, C65, and C68 together coordinate Zn(2+). The interval V83–G124 is disordered. Over residues C87–F101 the composition is skewed to basic residues.

It is found in the nucleus. In terms of biological role, transcription factor that binds specifically to a 5'-AA[AG]G-3' consensus core sequence. This is Dof zinc finger protein DOF1.2 (DOF1.2) from Arabidopsis thaliana (Mouse-ear cress).